The following is a 34-amino-acid chain: Brevinin-2Ec (34 aa).

A disulfide bridge connects residues cysteine 28 and cysteine 34.

Belongs to the frog skin active peptide (FSAP) family. Brevinin subfamily. Expressed by the skin glands.

The protein resides in the secreted. Functionally, shows antibacterial activity against representative Gram-negative and Gram-positive bacterial species, and hemolytic activity. This is Brevinin-2Ec from Pelophylax lessonae (Pool frog).